Reading from the N-terminus, the 236-residue chain is CBS domain-containing protein CBSX1, chloroplastic (236 aa).

The transit peptide at 1–53 directs the protein to the chloroplast; the sequence is MDAVLYSVPLSFTPLRASSSPSSPYLLLPRFLSVQPCHKFTFSRSFPSKSRIP. Positions 47 to 66 are disordered; sequence PSKSRIPSASSAAGSTLMTN. At Ser54 the chain carries N-acetylserine. CBS domains are found at residues 81 to 142 and 175 to 231; these read MTKK…GRTE and MTPA…IKRS.

It is found in the plastid. Its subcellular location is the chloroplast. The polypeptide is CBS domain-containing protein CBSX1, chloroplastic (CBSX1) (Arabidopsis thaliana (Mouse-ear cress)).